The primary structure comprises 176 residues: ATP-dependent protease subunit HslV (176 aa).

Threonine 2 is a catalytic residue. Na(+) is bound by residues glycine 157, cysteine 160, and threonine 163.

This sequence belongs to the peptidase T1B family. HslV subfamily. In terms of assembly, a double ring-shaped homohexamer of HslV is capped on each side by a ring-shaped HslU homohexamer. The assembly of the HslU/HslV complex is dependent on binding of ATP.

The protein localises to the cytoplasm. It catalyses the reaction ATP-dependent cleavage of peptide bonds with broad specificity.. Allosterically activated by HslU binding. Protease subunit of a proteasome-like degradation complex believed to be a general protein degrading machinery. This Escherichia coli O139:H28 (strain E24377A / ETEC) protein is ATP-dependent protease subunit HslV.